Reading from the N-terminus, the 228-residue chain is Putative N-acetylmannosamine-6-phosphate 2-epimerase (228 aa).

This sequence belongs to the NanE family.

The enzyme catalyses an N-acyl-D-glucosamine 6-phosphate = an N-acyl-D-mannosamine 6-phosphate. It participates in amino-sugar metabolism; N-acetylneuraminate degradation; D-fructose 6-phosphate from N-acetylneuraminate: step 3/5. Converts N-acetylmannosamine-6-phosphate (ManNAc-6-P) to N-acetylglucosamine-6-phosphate (GlcNAc-6-P). In Thermosynechococcus vestitus (strain NIES-2133 / IAM M-273 / BP-1), this protein is Putative N-acetylmannosamine-6-phosphate 2-epimerase.